The primary structure comprises 444 residues: Methylenetetrahydrofolate--tRNA-(uracil-5-)-methyltransferase TrmFO (444 aa).

9-14 is a binding site for FAD; the sequence is GAGLAG.

Belongs to the MnmG family. TrmFO subfamily. The cofactor is FAD.

It is found in the cytoplasm. The catalysed reaction is uridine(54) in tRNA + (6R)-5,10-methylene-5,6,7,8-tetrahydrofolate + NADH + H(+) = 5-methyluridine(54) in tRNA + (6S)-5,6,7,8-tetrahydrofolate + NAD(+). It carries out the reaction uridine(54) in tRNA + (6R)-5,10-methylene-5,6,7,8-tetrahydrofolate + NADPH + H(+) = 5-methyluridine(54) in tRNA + (6S)-5,6,7,8-tetrahydrofolate + NADP(+). Catalyzes the folate-dependent formation of 5-methyl-uridine at position 54 (M-5-U54) in all tRNAs. This chain is Methylenetetrahydrofolate--tRNA-(uracil-5-)-methyltransferase TrmFO, found in Koribacter versatilis (strain Ellin345).